The sequence spans 306 residues: Acetaldehyde dehydrogenase (306 aa).

Catalysis depends on cysteine 131, which acts as the Acyl-thioester intermediate. NAD(+)-binding positions include 162 to 170 and asparagine 273; that span reads SAGPGTRKN.

The protein belongs to the acetaldehyde dehydrogenase family.

It carries out the reaction acetaldehyde + NAD(+) + CoA = acetyl-CoA + NADH + H(+). This Albidiferax ferrireducens (strain ATCC BAA-621 / DSM 15236 / T118) (Rhodoferax ferrireducens) protein is Acetaldehyde dehydrogenase.